The following is a 301-amino-acid chain: tRNA dimethylallyltransferase (301 aa).

Position 12–19 (12–19) interacts with ATP; the sequence is GPTAVGKT. 14 to 19 lines the substrate pocket; that stretch reads TAVGKT. The interaction with substrate tRNA stretch occupies residues 37–40; it reads DSQQ.

The protein belongs to the IPP transferase family. In terms of assembly, monomer. Mg(2+) serves as cofactor.

The catalysed reaction is adenosine(37) in tRNA + dimethylallyl diphosphate = N(6)-dimethylallyladenosine(37) in tRNA + diphosphate. Its function is as follows. Catalyzes the transfer of a dimethylallyl group onto the adenine at position 37 in tRNAs that read codons beginning with uridine, leading to the formation of N6-(dimethylallyl)adenosine (i(6)A). The protein is tRNA dimethylallyltransferase of Streptococcus uberis (strain ATCC BAA-854 / 0140J).